We begin with the raw amino-acid sequence, 527 residues long: V-set and immunoglobulin domain-containing protein 10 (527 aa).

Residues 1-13 form the signal peptide; that stretch reads MWTRRWIQFLVLC. 4 consecutive Ig-like C2-type domains span residues 14–111, 123–212, 216–306, and 310–399; these read LHLW…LKVS, PTRT…RQLL, PPIT…CQIQ, and PLLE…KEIN. Topologically, residues 23–409 are extracellular; that stretch reads YLGVFRGDVN…VWLTVNKPHN (387 aa). N-linked (GlcNAc...) asparagine glycosylation is found at Asn32, Asn41, Asn52, Asn64, Asn74, Asn90, Asn129, Asn139, Asn191, Asn206, Asn226, Asn260, Asn276, Asn325, Asn346, and Asn375. Cys144 and Cys194 form a disulfide bridge. The cysteines at positions 238 and 288 are disulfide-linked. A disulfide bridge connects residues Cys330 and Cys387. Residues 410 to 430 form a helical membrane-spanning segment; sequence IVGLVTALLLLFLLVVAIITG. The Cytoplasmic portion of the chain corresponds to 431–527; it reads TVLYCDPQIY…TGEENQNEEI (97 aa). Positions 501-527 are disordered; sequence RPPESTSSDLFSEVSDDTGEENQNEEI. Residues 514–527 show a composition bias toward acidic residues; the sequence is VSDDTGEENQNEEI.

It localises to the membrane. This chain is V-set and immunoglobulin domain-containing protein 10 (vsig10), found in Xenopus laevis (African clawed frog).